A 490-amino-acid chain; its full sequence is Cytochrome P450 90D2 (490 aa).

The helical transmembrane segment at 4-24 (AAAGWAAPAFAVAAVVIWVVL) threads the bilayer. C437 contacts heme.

The protein belongs to the cytochrome P450 family. It depends on heme as a cofactor.

The protein resides in the membrane. It catalyses the reaction 6-deoxoteasterone + reduced [NADPH--hemoprotein reductase] + O2 = 3-dehydro-6-deoxoteasterone + oxidized [NADPH--hemoprotein reductase] + 2 H2O + H(+). Its pathway is plant hormone biosynthesis; brassinosteroid biosynthesis. Catalyzes the C6-oxidation step in brassinosteroids biosynthesis. May convert 6-deoxoteasterone (6-deoxoTE) to 3-dehydro-6-deoxoteasterone (6-deoxo3DT, 6-deoxo3DHT), and teasterone (TE) to 3-dehydroteasterone (3DT, 3-DHT). Involved in the elongation of leaf sheaths and stems. The chain is Cytochrome P450 90D2 from Oryza sativa subsp. indica (Rice).